Here is a 58-residue protein sequence, read N- to C-terminus: Preprotein translocase subunit SecG (58 aa).

The Cytoplasmic portion of the chain corresponds to 1 to 33 (MARRRKYEGLNPFVAAGLIKFSEEGELEKIKLS). The chain crosses the membrane as a helical span at residues 34-55 (PKAAIAISLAIIAAILALNLLL). The Extracellular portion of the chain corresponds to 56–58 (PPP).

This sequence belongs to the SEC61-beta family. As to quaternary structure, component of the protein translocase complex. Heterotrimer consisting of alpha (SecY), beta (SecG) and gamma (SecE) subunits. Can form oligomers of the heterotrimer.

The protein resides in the cell membrane. Its function is as follows. Involved in protein export. The function of the beta subunit is unknown, but it may be involved in stabilization of the trimeric complex. This is Preprotein translocase subunit SecG from Pyrobaculum calidifontis (strain DSM 21063 / JCM 11548 / VA1).